We begin with the raw amino-acid sequence, 337 residues long: DNA-directed RNA polymerase subunit alpha (337 aa).

An alpha N-terminal domain (alpha-NTD) region spans residues 1–233 (MIQKNWQELI…DQLSIFVNFE (233 aa)). Positions 249–337 (FNPALLKKVD…DLAKRYEDQY (89 aa)) are alpha C-terminal domain (alpha-CTD).

This sequence belongs to the RNA polymerase alpha chain family. In terms of assembly, homodimer. The RNAP catalytic core consists of 2 alpha, 1 beta, 1 beta' and 1 omega subunit. When a sigma factor is associated with the core the holoenzyme is formed, which can initiate transcription.

The catalysed reaction is RNA(n) + a ribonucleoside 5'-triphosphate = RNA(n+1) + diphosphate. Its function is as follows. DNA-dependent RNA polymerase catalyzes the transcription of DNA into RNA using the four ribonucleoside triphosphates as substrates. This is DNA-directed RNA polymerase subunit alpha from Brucella ovis (strain ATCC 25840 / 63/290 / NCTC 10512).